We begin with the raw amino-acid sequence, 83 residues long: Cytochrome b559 subunit alpha (83 aa).

A helical transmembrane segment spans residues 21–35 (IIHSITIPSLFIAGW). A heme-binding site is contributed by His23.

Belongs to the PsbE/PsbF family. Heterodimer of an alpha subunit and a beta subunit. PSII is composed of 1 copy each of membrane proteins PsbA, PsbB, PsbC, PsbD, PsbE, PsbF, PsbH, PsbI, PsbJ, PsbK, PsbL, PsbM, PsbT, PsbX, PsbY, PsbZ, Psb30/Ycf12, at least 3 peripheral proteins of the oxygen-evolving complex and a large number of cofactors. It forms dimeric complexes. Requires heme b as cofactor.

It localises to the plastid. The protein localises to the chloroplast thylakoid membrane. This b-type cytochrome is tightly associated with the reaction center of photosystem II (PSII). PSII is a light-driven water:plastoquinone oxidoreductase that uses light energy to abstract electrons from H(2)O, generating O(2) and a proton gradient subsequently used for ATP formation. It consists of a core antenna complex that captures photons, and an electron transfer chain that converts photonic excitation into a charge separation. This is Cytochrome b559 subunit alpha from Lotus japonicus (Lotus corniculatus var. japonicus).